The following is a 329-amino-acid chain: Ribonucleoside-diphosphate reductase subunit beta (329 aa).

Residues aspartate 66, glutamate 97, and histidine 101 each contribute to the Fe cation site. Tyrosine 105 is an active-site residue. The Fe cation site is built by glutamate 164, glutamate 198, and histidine 201.

It belongs to the ribonucleoside diphosphate reductase small chain family. As to quaternary structure, tetramer of two alpha and two beta subunits. The cofactor is Fe cation.

The enzyme catalyses a 2'-deoxyribonucleoside 5'-diphosphate + [thioredoxin]-disulfide + H2O = a ribonucleoside 5'-diphosphate + [thioredoxin]-dithiol. In terms of biological role, provides the precursors necessary for DNA synthesis. Catalyzes the biosynthesis of deoxyribonucleotides from the corresponding ribonucleotides. The chain is Ribonucleoside-diphosphate reductase subunit beta (nrdF) from Bacillus subtilis (strain 168).